The chain runs to 350 residues: 3-isopropylmalate dehydrogenase (350 aa).

76-87 provides a ligand contact to NAD(+); it reads GPKWDNAPKRPE. Positions 94, 104, 132, and 217 each coordinate substrate. Mg(2+)-binding residues include Asp-217, Asp-241, and Asp-245. 275–287 contacts NAD(+); that stretch reads GSAPDIANQNIAN.

The protein belongs to the isocitrate and isopropylmalate dehydrogenases family. LeuB type 1 subfamily. In terms of assembly, homodimer. The cofactor is Mg(2+). Mn(2+) serves as cofactor.

It is found in the cytoplasm. It catalyses the reaction (2R,3S)-3-isopropylmalate + NAD(+) = 4-methyl-2-oxopentanoate + CO2 + NADH. The protein operates within amino-acid biosynthesis; L-leucine biosynthesis; L-leucine from 3-methyl-2-oxobutanoate: step 3/4. In terms of biological role, catalyzes the oxidation of 3-carboxy-2-hydroxy-4-methylpentanoate (3-isopropylmalate) to 3-carboxy-4-methyl-2-oxopentanoate. The product decarboxylates to 4-methyl-2 oxopentanoate. In Listeria innocua serovar 6a (strain ATCC BAA-680 / CLIP 11262), this protein is 3-isopropylmalate dehydrogenase.